Consider the following 246-residue polypeptide: NLP effector protein Pc118548 (246 aa).

The signal sequence occupies residues Met-1–Ala-19. The Hepta-peptide GHRHDWE motif signature appears at Gly-122 to Glu-128. Asn-141 is a glycosylation site (N-linked (GlcNAc...) asparagine).

This sequence belongs to the Necrosis inducing protein (NPP1) family.

It is found in the secreted. In terms of biological role, secreted effector that contributes strongly to virulence during infection by P.capsici. Induces cell death in the Solanaceae, including Nicotiana benthamiana and hot pepper. The sequence is that of NLP effector protein Pc118548 from Phytophthora capsici.